A 345-amino-acid chain; its full sequence is Dihydroorotate dehydrogenase (quinone) (345 aa).

Residues 65–69 and Thr-89 each bind FMN; that span reads AGLDK. Lys-69 contacts substrate. 114 to 118 contributes to the substrate binding site; that stretch reads NRMGF. Asn-142 and Asn-175 together coordinate FMN. Asn-175 contributes to the substrate binding site. The Nucleophile role is filled by Ser-178. Asn-180 serves as a coordination point for substrate. FMN-binding residues include Lys-220 and Thr-248. 249-250 serves as a coordination point for substrate; the sequence is NT. FMN is bound by residues Gly-271, Gly-300, and 321-322; that span reads YT.

Belongs to the dihydroorotate dehydrogenase family. Type 2 subfamily. Monomer. FMN is required as a cofactor.

The protein localises to the cell membrane. It catalyses the reaction (S)-dihydroorotate + a quinone = orotate + a quinol. It participates in pyrimidine metabolism; UMP biosynthesis via de novo pathway; orotate from (S)-dihydroorotate (quinone route): step 1/1. Catalyzes the conversion of dihydroorotate to orotate with quinone as electron acceptor. This is Dihydroorotate dehydrogenase (quinone) from Burkholderia ambifaria (strain ATCC BAA-244 / DSM 16087 / CCUG 44356 / LMG 19182 / AMMD) (Burkholderia cepacia (strain AMMD)).